Here is a 2214-residue protein sequence, read N- to C-terminus: Sortilin-related receptor (2214 aa).

The first 28 residues, 1 to 28 (MATRSSRRESRLPFLFTLVALLPPGALC), serve as a signal peptide directing secretion. Residues 29–81 (EVWTQRLHGGSAPLPQDRGFLVVQGDPRELRLWARGDARGASRADEKPLRRKR) constitute a propeptide, removed in mature form. Positions 63-65 (RGD) match the Cell attachment site motif. At 82–2137 (SAALQPEPIK…TQAARSTDVA (2056 aa)) the chain is on the lumenal side. An N-linked (GlcNAc...) asparagine glycan is attached at asparagine 99. At serine 114 the chain carries Phosphoserine. The stretch at 136 to 147 (YVSYDYGKSFKK) is one BNR 1 repeat. Asparagine 158 is a glycosylation site (N-linked (GlcNAc...) asparagine). The stretch at 232-243 (WKSDDFGQTWIM) is one BNR 2 repeat. Asparagine 368 and asparagine 430 each carry an N-linked (GlcNAc...) asparagine glycan. BNR repeat units lie at residues 441–452 (VITFDKGGTWEF), 521–532 (YISSSAGARWRE), and 562–573 (KYSTNEGETWKT). 4 N-linked (GlcNAc...) asparagine glycosylation sites follow: asparagine 616, asparagine 674, asparagine 818, and asparagine 871. LDL-receptor class B repeat units follow at residues 800–843 (NCLY…EPLS), 844–887 (QLLY…VPQE), 888–932 (GVMF…DDQW), 933–970 (IYWTDAYLECIERITFSGQQRSVILDNLPHPYAIAVFK), and 971–1013 (NEIY…FYKG). In terms of domain architecture, EGF-like spans 1026-1072 (CSLLCLPKANNSRSCRCPEDVSSSVLPSGDLMCDCPQGYQLKNNTCV). N-linked (GlcNAc...) asparagine glycans are attached at residues asparagine 1035 and asparagine 1068. 9 consecutive LDL-receptor class A domains span residues 1076–1114 (NTCLRNQYRCSNGNCINSIWWCDFDNDCGDMSDERNCPT), 1115–1155 (TICD…HCEM), 1156–1194 (HQCRSDEYNCSSGMCIRSSWVCDGDNDCRDWSDEANCTA), 1198–1236 (TCEASNFQCRNGHCIPQRWACDGDTDCQDGSDEDPVNCE), 1238–1272 (KCNGFRCPNGTCIPSSKHCDGLRDCSDGSDEQHCE), 1273–1317 (PLCT…GCSQ), 1323–1361 (KVCDEFGFQCQNGVCISLIWKCDGMDDCGDYSDEANCEN), 1366–1405 (PNCSRYFQFRCENGHCIPNRWKCDRENDCGDWSDEKDCGD), and 1417–1455 (STCLPNYYRCSSGTCVMDTWVCDGYRDCADGSDEEACPL). 21 cysteine pairs are disulfide-bonded: cysteine 1078–cysteine 1090, cysteine 1085–cysteine 1103, cysteine 1097–cysteine 1112, cysteine 1117–cysteine 1131, cysteine 1125–cysteine 1144, cysteine 1138–cysteine 1153, cysteine 1158–cysteine 1170, cysteine 1165–cysteine 1183, cysteine 1177–cysteine 1192, cysteine 1199–cysteine 1211, cysteine 1206–cysteine 1224, cysteine 1218–cysteine 1235, cysteine 1239–cysteine 1249, cysteine 1244–cysteine 1262, cysteine 1256–cysteine 1271, cysteine 1275–cysteine 1289, cysteine 1283–cysteine 1302, cysteine 1296–cysteine 1315, cysteine 1325–cysteine 1337, cysteine 1332–cysteine 1350, and cysteine 1344–cysteine 1359. Asparagine 1164 carries N-linked (GlcNAc...) asparagine glycosylation. Asparagine 1191 is a glycosylation site (N-linked (GlcNAc...) asparagine). A glycan (N-linked (GlcNAc...) asparagine) is linked at asparagine 1246. N-linked (GlcNAc...) asparagine glycosylation is present at asparagine 1367. 6 disulfides stabilise this stretch: cysteine 1368–cysteine 1381, cysteine 1376–cysteine 1394, cysteine 1388–cysteine 1403, cysteine 1419–cysteine 1431, cysteine 1426–cysteine 1444, and cysteine 1438–cysteine 1453. The N-linked (GlcNAc...) asparagine glycan is linked to asparagine 1458. 2 consecutive LDL-receptor class A domains span residues 1469-1508 (GRCDRFEFECHQPKTCIPNWKRCDGHQDCQDGRDEANCPT) and 1512-1551 (LTCMSREFQCEDGEACIVLSERCDGFLDCSDESDEKACSD). 6 cysteine pairs are disulfide-bonded: cysteine 1471/cysteine 1484, cysteine 1478/cysteine 1497, cysteine 1491/cysteine 1506, cysteine 1514/cysteine 1527, cysteine 1521/cysteine 1540, and cysteine 1534/cysteine 1549. 6 consecutive Fibronectin type-III domains span residues 1557–1649 (KVQN…TPEG), 1653–1745 (APRN…TIKG), 1749–1844 (PPPD…VRPP), 1843–1927 (PPAP…VVKM), 1934–2029 (PPRH…APDA), and 2030–2118 (LKII…LYDE). Asparagine 1608, asparagine 1706, asparagine 1733, asparagine 1809, asparagine 1854, asparagine 1894, asparagine 1986, asparagine 2010, asparagine 2054, asparagine 2069, asparagine 2076, and asparagine 2092 each carry an N-linked (GlcNAc...) asparagine glycan. Residues 2138 to 2158 (AVVVPILFLILLSLGVGFAIL) form a helical membrane-spanning segment. Residues 2159–2214 (YTKHRRLQSSFTAFANSHYSSRLGSAIFSSGDDLGEDDEDAPMITGFSDDVPMVIA) are Cytoplasmic-facing. Residues 2161–2164 (KHRR) carry the Potential nuclear localization signal for the C-terminal fragment generated by PSEN1 motif. The Endocytosis signal signature appears at 2172–2177 (FANSHY). The interval 2190–2214 (DDLGEDDEDAPMITGFSDDVPMVIA) is required for efficient Golgi apparatus - endosome sorting. Positions 2201–2214 (MITGFSDDVPMVIA) are required for interaction with GGA1 and GGA2. Serine 2206 carries the phosphoserine; by ROCK2 modification. Residues 2208-2212 (DVPMV) carry the DXXLL motif involved in the interaction with GGA1 motif.

The protein belongs to the VPS10-related sortilin family. SORL1 subfamily. As to quaternary structure, after maturation cleavage, interacts (via N-terminus) with its own propeptide; this interaction prevents interaction with other ligands, including CRLF1, GDNF, GFRA1, IL6 and IL6R. Interacts (via N-terminal ectodomain) with APP, forming a 1:1 stoichiometric complex, including with isoforms APP695, APP751 and APP770; this interaction retains APP in the trans-Golgi network and reduces processing into soluble APP-alpha and amyloid-beta peptides. Also interacts with APP C-terminal fragment C99 and with Abeta40. Interacts with beta-secretase BACE1/BACE; this interaction may affect BACE1-binding to APP and hence reduce BACE1-dependent APP cleavage. Interacts with LRPAP1/RAP. Interacts (via C-terminal cytosolic domain) with GGA1 and GGA2 (via N-terminal VHS domain). Interacts with PACS1. May interact (via the N-terminal ectodomain) with the morphogenetic neuropeptide, also called head activator or HA; this interaction is impaired in the presence of propeptide. Interacts with neurotensin/NTS. Interacts (via the N-terminal ectodomain) with PDGFB homodimer. Interacts (via N-terminal ectodomain) with the uPA receptor PLAUR; this interaction decreases PLAUR internalization. Interacts (via N-terminal ectodomain) with uPA/PLAU and PAI1/SERPINE1, either individually or in complex with each other, leading to endocytosis; this interaction is abolished in the presence of LRPAP1. Also interacts with the ternary complex composed of PLAUR-PLAU-PAI1. Also interacts with tPA/PLAT either alone or in complex with SERPINE1. Interacts (via C-terminus) with AP-1 and AP-2 complexes. Interacts with BMPR1A and BMPR1B. Interacts with lipoprotein lipase LPL; this interaction is optimal in slightly acidic conditions. Interacts (via N-terminal ectodomain) with GDNF (via propeptide) and GDNF receptor alpha-1/GFRA1, either individually or in complex with each other. The interaction with GDNF occurs mostly intracellularly. Also interacts with other GDNF receptor alpha family members, including GFRA2, GFRA3 and GFRA4. Interacts with the insulin receptor INSR; this interaction strongly increases the surface exposure of INSR. Interacts (via cytosolic C-terminus) with STK39/SPAK. Interacts (via N-terminal ectodomain) with the heterodimeric complex CRLF1-CLC; within this complex, the interaction is mediated predominantly by the CRLF1 moiety. Interacts with CNTFR, as well as with the tripartite signaling complex formed by CRLF1, CLC and CNTFR. Interacts (via N-terminal ectodomain) with IL6; this interaction leads to IL6 internalization and lysosomal degradation. Binding of SOLRL1 secreted N-terminal ectodomain to IL6 may increase IL6 trans signaling. Interacts with secreted IL6R; this interaction leads to IL6R internalization. Also interacts with transmembrane IL6R; this interaction does not affect IL6R subcellular location. Interacts with APOE. Interacts with apolipoprotein E-rich beta-VLDL. Interacts with APOA5; this interaction leads to APOA5 internalization and is abolished by heparin. Interaction with APOA5 results in enhanced binding to chylomicrons. Interacts with ROCK2. Interacts (via cytosolic C-terminus) with PPP3CB/calcineurin A beta. Interacts with NTRK2/TRKB; this interaction facilitates NTRK2 trafficking between synaptic plasma membranes, postsynaptic densities and cell soma, hence positively regulates BDNF signaling. Interacts (via cytosolic C-terminus) with HSPA12A in an ADP-dependent manner; this interaction affects SORL1 internalization and subcellular localization. Interacts (via N-terminal ectodomain) with ERBB2/HER2. In terms of processing, within the Golgi apparatus, the propeptide may be cleaved off by FURIN or a furin-like protease. After cleavage, the propeptide interacts with the mature protein N-terminus, preventing the association with other ligands. At the cell surface, partially subjected to proteolytic shedding that releases the ectodomain in the extracellular milieu. The shedding may be catalyzed by ADAM17/TACE. Following shedding, PSEN1/presenilin-1 cleaves the remaining transmembrane fragment and catalyzes the release of a C-terminal fragment in the cytosol and of a soluble N-terminal beta fragment in the extracellular milieu. The C-terminal cytosolic fragment localizes to the nucleus. Post-translationally, phosphorylation at Ser-2206 facilitates the interaction with GGA1. In terms of tissue distribution, highly expressed in brain (at protein level). Most abundant in the cerebellum, cerebral cortex and occipital pole; low levels in the putamen and thalamus. Expression is significantly reduced in the frontal cortex of patients suffering from Alzheimer disease. Also expressed in spinal cord, spleen, testis, prostate, ovary, thyroid and lymph nodes.

It is found in the golgi apparatus membrane. Its subcellular location is the golgi apparatus. The protein localises to the trans-Golgi network membrane. The protein resides in the endosome membrane. It localises to the early endosome membrane. It is found in the recycling endosome membrane. Its subcellular location is the endoplasmic reticulum membrane. The protein localises to the endosome. The protein resides in the multivesicular body membrane. It localises to the cell membrane. It is found in the cytoplasmic vesicle. Its subcellular location is the secretory vesicle membrane. The protein localises to the secreted. Its function is as follows. Sorting receptor that directs several proteins to their correct location within the cell. Along with AP-1 complex, involved Golgi apparatus - endosome sorting. Sorting receptor for APP, regulating its intracellular trafficking and processing into amyloidogenic-beta peptides. Retains APP in the trans-Golgi network, hence preventing its transit through late endosomes where amyloid beta peptides Abeta40 and Abeta42 are generated. May also sort newly produced amyloid-beta peptides to lysosomes for catabolism. Does not affect APP trafficking from the endoplasmic reticulum to Golgi compartments. Sorting receptor for the BDNF receptor NTRK2/TRKB that facilitates NTRK2 trafficking between synaptic plasma membranes, postsynaptic densities and cell soma, hence positively regulates BDNF signaling by controlling the intracellular location of its receptor. Sorting receptor for GDNF that promotes GDNF regulated, but not constitutive secretion. Sorting receptor for the GDNF-GFRA1 complex, directing it from the cell surface to endosomes. GDNF is then targeted to lysosomes and degraded, while its receptor GFRA1 recycles back to the cell membrane, resulting in a GDNF clearance pathway. The SORL1-GFRA1 complex further targets RET for endocytosis, but not for degradation, affecting GDNF-induced neurotrophic activities. Sorting receptor for ERBB2/HER2. Regulates ERBB2 subcellular distribution by promoting its recycling after internalization from endosomes back to the plasma membrane, hence stimulating phosphoinositide 3-kinase (PI3K)-dependent ERBB2 signaling. In ERBB2-dependent cancer cells, promotes cell proliferation. Sorting receptor for lipoprotein lipase LPL. Promotes LPL localization to endosomes and later to the lysosomes, leading to degradation of newly synthesized LPL. Potential sorting receptor for APOA5, inducing APOA5 internalization to early endosomes, then to late endosomes, wherefrom a portion is sent to lysosomes and degradation, another portion is sorted to the trans-Golgi network. Sorting receptor for the insulin receptor INSR. Promotes recycling of internalized INSR via the Golgi apparatus back to the cell surface, thereby preventing lysosomal INSR catabolism, increasing INSR cell surface expression and strengthening insulin signal reception in adipose tissue. Does not affect INSR internalization. Plays a role in renal ion homeostasis, controlling the phospho-regulation of SLC12A1/NKCC2 by STK39/SPAK kinase and PPP3CB/calcineurin A beta phosphatase, possibly through intracellular sorting of STK39 and PPP3CB. Stimulates, via the N-terminal ectodomain, the proliferation and migration of smooth muscle cells, possibly by increasing cell surface expression of the urokinase receptor uPAR/PLAUR. This may promote extracellular matrix proteolysis and hence facilitate cell migration. By acting on the migration of intimal smooth muscle cells, may accelerate intimal thickening following vascular injury. Promotes adhesion of monocytes. Stimulates proliferation and migration of monocytes/macrophages. Through its action on intimal smooth muscle cells and macrophages, may accelerate intimal thickening and macrophage foam cell formation in the process of atherosclerosis. Regulates hypoxia-enhanced adhesion of hematopoietic stem and progenitor cells to the bone marrow stromal cells via a PLAUR-mediated pathway. This function is mediated by the N-terminal ectodomain. Metabolic regulator, which functions to maintain the adequate balance between lipid storage and oxidation in response to changing environmental conditions, such as temperature and diet. The N-terminal ectodomain negatively regulates adipose tissue energy expenditure, acting through the inhibition the BMP/Smad pathway. May regulate signaling by the heterodimeric neurotrophic cytokine CLCF1-CRLF1 bound to the CNTFR receptor by promoting the endocytosis of the tripartite complex CLCF1-CRLF1-CNTFR and lysosomal degradation. May regulate IL6 signaling, decreasing cis signaling, possibly by interfering with IL6-binding to membrane-bound IL6R, while up-regulating trans signaling via soluble IL6R. This chain is Sortilin-related receptor (SORL1), found in Homo sapiens (Human).